A 236-amino-acid chain; its full sequence is C-&gt;U-editing enzyme APOBEC-1 (236 aa).

The 125-residue stretch at Gly-10–Leu-134 folds into the CMP/dCMP-type deaminase domain. His-61 is a Zn(2+) binding site. Glu-63 (proton donor) is an active-site residue. The Zn(2+) site is built by Cys-93 and Cys-96.

This sequence belongs to the cytidine and deoxycytidylate deaminase family. As to quaternary structure, homodimer. Interacts with A1CF; form an mRNA editing complex. Interacts with RBM47; form an mRNA editing complex. Found in a complex with CELF2/CUGBP2 and A1CF. Interacts with HNRPAB. Interacts with SYNCRIP. The cofactor is Zn(2+). Expressed exclusively in the small intestine.

Its subcellular location is the cytoplasm. The protein localises to the nucleus. The catalysed reaction is a cytidine in mRNA + H2O + H(+) = a uridine in mRNA + NH4(+). It carries out the reaction cytidine(6666) in apoB mRNA + H2O + H(+) = uridine(6666) in apoB mRNA + NH4(+). Cytidine deaminase catalyzing the cytidine to uridine postranscriptional editing of a variety of mRNAs. Form complexes with cofactors that confer differential editing activity and selectivity. Responsible for the postranscriptional editing of a CAA codon for Gln to a UAA codon for stop in the apolipoprotein B mRNA. Also involved in CGA (Arg) to UGA (Stop) editing in the NF1 mRNA. May also play a role in the epigenetic regulation of gene expression by participating in DNA demethylation. This Homo sapiens (Human) protein is C-&gt;U-editing enzyme APOBEC-1.